Here is a 101-residue protein sequence, read N- to C-terminus: DET1- and DDB1-associated protein 1 (101 aa).

The disordered stretch occupies residues 67-101 (NAAKKRDQDQLEIGETSAPPRKIARTDSQEMNEDT).

Belongs to the DDA1 family. Component of numerous DCX (DDB1-CUL4-X-box) E3 ubiquitin-protein ligase complexes which consist of a core of DDB1, cullin-4 (CUL4A or CUL4B), DDA1 and RBX1.

It participates in protein modification; protein ubiquitination. Functionally, functions as a component of numerous distinct DCX (DDB1-CUL4-X-box) E3 ubiquitin-protein ligase complexes which mediate the ubiquitination and subsequent proteasomal degradation of target proteins. In the DCX complexes, acts as a scaffolding subunit required to stabilize the complex. In Xenopus laevis (African clawed frog), this protein is DET1- and DDB1-associated protein 1.